The primary structure comprises 478 residues: POU domain, class 2, transcription factor 2 (478 aa).

Disordered stretches follow at residues 1-82 (MVHS…PPQA), 167-199 (QAVTRPTLSDPHLSHPQPPKCLEPPSHPEEASD), 275-298 (SSLPSPNQLSRPSLGFDGLPGRRR), 357-391 (PCSAAPMLPSPGKPASYSPHLVTPQGGAGTLPLSQ), and 409-478 (TLHP…PYQP). Basic and acidic residues predominate over residues 12–37 (RMSKPLEAEKQGLDSPSEHTDTERNG). Positions 38–60 (PDTNHQNPQNKTSPFSVSPTGPS) are enriched in polar residues. Residues 195–269 (EEASDLEELE…LLEKWLNDAE (75 aa)) form the POU-specific domain. Residues 275 to 285 (SSLPSPNQLSR) show a composition bias toward polar residues. A DNA-binding region (homeobox) is located at residues 297–356 (RRKKRTSIETNVRFALEKSFLANQKPTSEEILLIAEQLHMEKEVIRVWFCNRRQKEKRIN). Residues 389-410 (LSQASSSLSTTVTTLSSAVGTL) are leucine-zipper. Residues 416–425 (AGGGAAGGGA) show a composition bias toward gly residues.

The protein belongs to the POU transcription factor family. Class-2 subfamily. Interacts with NR3C1, AR and PGR. Interacts with POU2AF1; the interaction increases POU2F2 transactivation activity. In terms of tissue distribution, predominantly expressed in B-cells.

It is found in the nucleus. Transactivation activity is enhanced by transcriptional coactivator POU2AF1. In terms of biological role, transcription factor that specifically binds to the octamer motif (5'-ATTTGCAT-3'). Regulates IL6 expression in B cells with POU2AF1. Regulates transcription in a number of tissues in addition to activating immunoglobulin gene expression. Modulates transcription transactivation by NR3C1, AR and PGR. The chain is POU domain, class 2, transcription factor 2 (POU2F2) from Sus scrofa (Pig).